Reading from the N-terminus, the 154-residue chain is Urease accessory protein UreE (154 aa).

It belongs to the UreE family.

Its subcellular location is the cytoplasm. In terms of biological role, involved in urease metallocenter assembly. Binds nickel. Probably functions as a nickel donor during metallocenter assembly. The sequence is that of Urease accessory protein UreE from Escherichia coli O157:H7.